We begin with the raw amino-acid sequence, 293 residues long: MKRSRSQNLITEMILLLRVSLHPFVVDGCKWCLTAYPKGYNFIGYLSLYLEVADNGSLPFGWRRHARYTLTLVNQNSKKSFQPNEVQEWFDDSIKWGCPSMFPLNEIHAKDSGFLVNGELKIVAEIDILEVIGDVDVSEGISTVKETIHVNGFQLLPSQAKSVSHIFERHPEIASEIHPKNSSLRTGYMSLLLSLIETLSQSPQELSKDDLCDVYIAIGCMKNAGFKLDWLENKLYEVAQKKEDDEAGETRLREMEEKLKDLKLKCSKMEALVEEEKAKVSAAKAHLSFDDVV.

The MATH domain maps to 3–126 (RSRSQNLITE…NGELKIVAEI (124 aa)). Positions 227-285 (KLDWLENKLYEVAQKKEDDEAGETRLREMEEKLKDLKLKCSKMEALVEEEKAKVSAAKA) form a coiled coil.

The protein is MATH domain and coiled-coil domain-containing protein At3g58400 of Arabidopsis thaliana (Mouse-ear cress).